Reading from the N-terminus, the 323-residue chain is tRNA dimethylallyltransferase (323 aa).

Residue 12–19 coordinates ATP; sequence GPTAAGKT. A substrate-binding site is contributed by 14 to 19; the sequence is TAAGKT. Interaction with substrate tRNA regions lie at residues 37-40 and 161-165; these read DSAL and QRLTR.

It belongs to the IPP transferase family. In terms of assembly, monomer. Mg(2+) is required as a cofactor.

It carries out the reaction adenosine(37) in tRNA + dimethylallyl diphosphate = N(6)-dimethylallyladenosine(37) in tRNA + diphosphate. In terms of biological role, catalyzes the transfer of a dimethylallyl group onto the adenine at position 37 in tRNAs that read codons beginning with uridine, leading to the formation of N6-(dimethylallyl)adenosine (i(6)A). This chain is tRNA dimethylallyltransferase, found in Pseudomonas fluorescens (strain ATCC BAA-477 / NRRL B-23932 / Pf-5).